The following is a 2151-amino-acid chain: MEGDERGVLLACVISGTLFTVFGSGSFWILWAVNWRPWRLYSWIFARKWPKVLQGPQLDILCGVLSLFAWIVVVSPIAILIGWGSWLIVILDRHIIGLAIIMAGTALLLAFYSIMLWWRTQWQSSRAVALLLLLGVALLCAYELCAVYVTAGAHASQQYSPSGFFFGVSAIALAINMLFICRMVFNGNGLDVDEYVRRAYKFAYSDCIEVGPVACLPEPPDPNELYPRQTSRASHLGLLYLGSLVVLLAYSVLYGLTARESRWLGGITSAAVIVLDWNIGACLYGFKLLQNRVLALFVAGISRLFLICFGIHYWYLGHCISYIFVASVLSGAAVSRHLSITDPSAARRDALQSTVIRLREGFRRKEQNSSSSSSDGCGSSIKRSSSIDAGHTGCTNEANRTAESCTADNLTRTGSSQEGINSDKSEESGRPSLGLRSSSCRSVVQEPEAGTSYFMDKVSDQNNTLVVCSSSGLDSQGYESSTSNSANQQLLDMNLALAFQDQLNNPRIASILKKKAKEGDLELTNLLQDKGLDPNFAVMLKEKNLDPTILALLQRSSLDADRDHRDNTDITIIDSNSVDNTLPNQISLSEELRLRGLEKWLKLSRLLLHHVAGTPERAWGLFSLVFILETIIVAIFRPKTITIINSSHQQFEFGFSVLLLSPVVCSIMAFLRSLQVEEMALTSKSRKYGFVAWLLSTSVGLSLSFLSKSSVLLGISLTVPLMAACLSIAVPIWMHNGYQFWVPQLSCGDQARDLRSPRIKGFILWICVVLFAGSVISLGAIISAKPLDDLKYKLFSARENNVTSPYTSSVYLGWAMSSGIALVVTAILPIVSWFATYRFSHSSAVCLMIFSVVLVAFCGTSYLEVVKSRDDQLPTKGDFLAALLPLACIPALLSLCCGMVKWKDDCWILSRGVYVFFSIGLLLLFGAIAAVIAVKPWTIGVSFLLVLFLMVVTIGVIHLWASNNFYLTRKQTSFVCFLALLLGLAAFLLGWHQDKAFAGASVGYFTFLSLLAGRALAVLLSPPIVVYSPRVLPVYVYDAHADCGKNVSAAFLVLYGIALATEGWGVVASLIIYPPFAGAAVSAITLVVAFGFAVSRPCLTLEMMEVAVRFLSKDTIVQAISRSATKTRNALSGTYSAPQRSASSAALLVGDPSAMRDKAGNFVLPRDDVMKLRDRLRNEERVAGSIFYKMQCRKGFRHEPPTNVDYRRDMCAHARVLALEEAIDTEWVYMWDKFGGYLLLLLGLTAKAERVQDEVRLRLFLDSIGFSDLSARKISKWKPEDRRQFEIIQESYLREKEMEEESLMQRREEEGRGKERRKALLEKEERKWKEIEASLIPSIPNAGSREAAAMAAAIRAVGGDSVLEDSFARERVSGIARRIRTAQLERRAQQTGISGAVCVLDDEPMISGKHCGQMDSSVCQSQKISFSVTAMIQSDSGPVCLFGTEFQKKVCWEILVAGSEQGIEAGQVGLRLITKGERQTTVAREWYIGATSITDGRWHTVTITIDADAGEATCYIDGGFDGYQNGLPLSIGSAIWEQGAEVWLGVRPPIDVDAFGRSDSDGVESKMHIMDVFLWGKCLSEEEAASLHAAIGMADLDMIDLSDDNWQWTDSPPRVDGWDSDPADVDLYDRDDVDWDGQYSSGRKRRSGRDFVMSVDSFARRHRKPRMETQEDINQRMRSVELAVKEALSARGDKQFTDQEFPPNDRSLFVDTQNPPSKLQVVSEWMRPDSIVKENGSDSRPCLFSGDANPSDVCQGRLGDCWFLSAVAVLTEVSRISEVIITPEYNEEGIYTVRFCIQGEWVPVVIDDWIPCESPGKPAFATSRKLNELWVSMVEKAYAKLHGSYEALEGGLVQDALVDLTGGAGEEIDLRSAQAQIDLASGRLWSQLLRFKQEGFLLGAGSPSGSDVHVSSSGIVQGHAYSVLQVREVDGHRLVQIRNPWANEVEWNGPWSDSSPEWTDRMKHKLKHVPQSKEGIFWMSWQDFQIHFRSIYVCRVYPREMRYSVNGQWRGYSAGGCQDYSSWHQNPQFRLRATGSDASLPIHVFITLTQGVGFSRTTPGFRNYQSSHDSQLFYIGLRILKTRGRRAAYNIFLHESVGGTDYVNSREISCEMVLDPDPKGYTIVPTTIHPGEEAPFVLSVFTKASIVLEAL.

The N-terminal stretch at 1-32 (MEGDERGVLLACVISGTLFTVFGSGSFWILWA) is a signal peptide. Residues 33 to 69 (VNWRPWRLYSWIFARKWPKVLQGPQLDILCGVLSLFA) are Extracellular-facing. Residues 70–90 (WIVVVSPIAILIGWGSWLIVI) traverse the membrane as a helical segment. Residues 91-94 (LDRH) lie on the Cytoplasmic side of the membrane. The helical transmembrane segment at 95-115 (IIGLAIIMAGTALLLAFYSIM) threads the bilayer. The Extracellular portion of the chain corresponds to 116 to 126 (LWWRTQWQSSR). The helical transmembrane segment at 127 to 147 (AVALLLLLGVALLCAYELCAV) threads the bilayer. The Cytoplasmic segment spans residues 148 to 163 (YVTAGAHASQQYSPSG). Residues 164-184 (FFFGVSAIALAINMLFICRMV) traverse the membrane as a helical segment. Residues 185–235 (FNGNGLDVDEYVRRAYKFAYSDCIEVGPVACLPEPPDPNELYPRQTSRASH) lie on the Extracellular side of the membrane. A helical membrane pass occupies residues 236-256 (LGLLYLGSLVVLLAYSVLYGL). At 257–263 (TARESRW) the chain is on the cytoplasmic side. Residues 264–284 (LGGITSAAVIVLDWNIGACLY) traverse the membrane as a helical segment. Over 285–293 (GFKLLQNRV) the chain is Extracellular. The helical transmembrane segment at 294 to 314 (LALFVAGISRLFLICFGIHYW) threads the bilayer. The Cytoplasmic portion of the chain corresponds to 315-319 (YLGHC). Residues 320–340 (ISYIFVASVLSGAAVSRHLSI) form a helical membrane-spanning segment. At 341 to 615 (TDPSAARRDA…LLLHHVAGTP (275 aa)) the chain is on the extracellular side. Disordered regions lie at residues 363–393 (RRKE…GHTG) and 405–442 (CTAD…SCRS). Positions 369 to 388 (SSSSSSDGCGSSIKRSSSID) are enriched in low complexity. A compositionally biased stretch (polar residues) spans 405 to 420 (CTADNLTRTGSSQEGI). Positions 430-442 (RPSLGLRSSSCRS) are enriched in low complexity. The helical transmembrane segment at 616–636 (ERAWGLFSLVFILETIIVAIF) threads the bilayer. Over 637–652 (RPKTITIINSSHQQFE) the chain is Cytoplasmic. The chain crosses the membrane as a helical span at residues 653–673 (FGFSVLLLSPVVCSIMAFLRS). The Extracellular segment spans residues 674–686 (LQVEEMALTSKSR). A helical membrane pass occupies residues 687–707 (KYGFVAWLLSTSVGLSLSFLS). Topologically, residues 708-711 (KSSV) are cytoplasmic. Residues 712 to 732 (LLGISLTVPLMAACLSIAVPI) form a helical membrane-spanning segment. Residues 733-760 (WMHNGYQFWVPQLSCGDQARDLRSPRIK) lie on the Extracellular side of the membrane. A helical membrane pass occupies residues 761–782 (GFILWICVVLFAGSVISLGAII). The Cytoplasmic portion of the chain corresponds to 783 to 813 (SAKPLDDLKYKLFSARENNVTSPYTSSVYLG). Residues 814 to 834 (WAMSSGIALVVTAILPIVSWF) form a helical membrane-spanning segment. At 835-844 (ATYRFSHSSA) the chain is on the extracellular side. The chain crosses the membrane as a helical span at residues 845-865 (VCLMIFSVVLVAFCGTSYLEV). The Cytoplasmic segment spans residues 866–878 (VKSRDDQLPTKGD). Residues 879–899 (FLAALLPLACIPALLSLCCGM) form a helical membrane-spanning segment. Topologically, residues 900–912 (VKWKDDCWILSRG) are extracellular. Residues 913–933 (VYVFFSIGLLLLFGAIAAVIA) form a helical membrane-spanning segment. The Cytoplasmic portion of the chain corresponds to 934 to 936 (VKP). Residues 937 to 957 (WTIGVSFLLVLFLMVVTIGVI) traverse the membrane as a helical segment. Residues 958-971 (HLWASNNFYLTRKQ) lie on the Extracellular side of the membrane. A helical transmembrane segment spans residues 972 to 992 (TSFVCFLALLLGLAAFLLGWH). At 993–1006 (QDKAFAGASVGYFT) the chain is on the cytoplasmic side. The chain crosses the membrane as a helical span at residues 1007-1027 (FLSLLAGRALAVLLSPPIVVY). The Extracellular segment spans residues 1028-1050 (SPRVLPVYVYDAHADCGKNVSAA). Residues 1051–1071 (FLVLYGIALATEGWGVVASLI) traverse the membrane as a helical segment. The Cytoplasmic portion of the chain corresponds to 1072–2151 (IYPPFAGAAV…TKASIVLEAL (1080 aa)). 2 consecutive Calpain catalytic domains span residues 1407–1600 (SGKH…DMID) and 1695–1997 (QFTD…CRVY). Residues cysteine 1761, histidine 1919, and asparagine 1939 contribute to the active site.

Belongs to the peptidase C2 family. In terms of processing, autocatalytic proteolytic cleavage leading to the production of mainly cytoplasmic localized subproducts of about 85 and 120 kDa. In terms of tissue distribution, mostly expressed in meristems and organ primordia. Expressed at low levels in young and germinating seeds at 10 ppm and in seedling roots at 67 ppm. Present in most tissues at a low level.

Its subcellular location is the cell membrane. The protein localises to the endosome membrane. The protein resides in the endoplasmic reticulum membrane. It is found in the cytoplasm. Functionally, essential protease involved in epiderm development. Required for aleurone cell development in the endosperm probably by maintaining and restricting the aleurone and embryonic epidermal L1 cell-layer fates as well as meristems organization. Involved in the maintenance of adaxial/abaxial axis information in developing leaves, probably by regulating cell proliferation and expansion. Does not need calcium ions to be active. Required for the formation of giant cells in sepals by determining cell fate and promoting endoreplication. This is Calpain-type cysteine protease DEK1 from Arabidopsis thaliana (Mouse-ear cress).